Reading from the N-terminus, the 79-residue chain is uncharacterized protein (79 aa).

The signal sequence occupies residues 1–24; sequence MKMNPCTVILCKSLFFFCLFQVDC. The N-linked (GlcNAc...) asparagine glycan is linked to asparagine 33.

It is found in the secreted. This is an uncharacterized protein from Saccharomyces cerevisiae (strain ATCC 204508 / S288c) (Baker's yeast).